A 122-amino-acid chain; its full sequence is Large ribosomal subunit protein uL14 (122 aa).

This sequence belongs to the universal ribosomal protein uL14 family. In terms of assembly, part of the 50S ribosomal subunit. Forms a cluster with proteins L3 and L19. In the 70S ribosome, L14 and L19 interact and together make contacts with the 16S rRNA in bridges B5 and B8.

Functionally, binds to 23S rRNA. Forms part of two intersubunit bridges in the 70S ribosome. In Pseudothermotoga lettingae (strain ATCC BAA-301 / DSM 14385 / NBRC 107922 / TMO) (Thermotoga lettingae), this protein is Large ribosomal subunit protein uL14.